A 120-amino-acid polypeptide reads, in one-letter code: Large ribosomal subunit protein uL18 (120 aa).

The protein belongs to the universal ribosomal protein uL18 family. Part of the 50S ribosomal subunit; part of the 5S rRNA/L5/L18/L25 subcomplex. Contacts the 5S and 23S rRNAs.

This is one of the proteins that bind and probably mediate the attachment of the 5S RNA into the large ribosomal subunit, where it forms part of the central protuberance. The protein is Large ribosomal subunit protein uL18 of Allorhizobium ampelinum (strain ATCC BAA-846 / DSM 112012 / S4) (Agrobacterium vitis (strain S4)).